The chain runs to 78 residues: Small ribosomal subunit protein bS18 (78 aa).

It belongs to the bacterial ribosomal protein bS18 family. Part of the 30S ribosomal subunit. Forms a tight heterodimer with protein bS6.

Binds as a heterodimer with protein bS6 to the central domain of the 16S rRNA, where it helps stabilize the platform of the 30S subunit. The sequence is that of Small ribosomal subunit protein bS18 from Thermobifida fusca (strain YX).